The primary structure comprises 430 residues: Levansucrase Lscgamma (430 aa).

Residues Trp-60, Asp-61, Ala-147, Arg-217, and Asp-218 each contribute to the sucrose site. Asp-61 functions as the Nucleophile in the catalytic mechanism. Catalysis depends on Glu-302, which acts as the Proton donor/acceptor.

It belongs to the glycosyl hydrolase 68 family. In terms of assembly, homodimer.

The catalysed reaction is [6)-beta-D-fructofuranosyl-(2-&gt;](n) alpha-D-glucopyranoside + sucrose = [6)-beta-D-fructofuranosyl-(2-&gt;](n+1) alpha-D-glucopyranoside + D-glucose. Its activity is regulated as follows. Sucrose hydrolase activity is negatively affected by salt concentration. The levan polymerization rate increases sharply in relation to sucrose concentration reaching the maximum at 100 mM sucrose, and then steadily decreases, suggesting a strong inhibition of the activity by the substrate. In terms of biological role, catalyzes the synthesis of levan, a fructose polymer, by transferring the fructosyl moiety from sucrose to a growing acceptor molecule. Also displays sucrose hydrolase activity. Can depolymerize the levan produced once substrate is completely exhausted. In Pseudomonas syringae pv. actinidiae, this protein is Levansucrase Lscgamma.